The sequence spans 287 residues: 33 kDa chaperonin (287 aa).

2 disulfide bridges follow: Cys233-Cys235 and Cys266-Cys269.

The protein belongs to the HSP33 family. Post-translationally, under oxidizing conditions two disulfide bonds are formed involving the reactive cysteines. Under reducing conditions zinc is bound to the reactive cysteines and the protein is inactive.

Its subcellular location is the cytoplasm. Functionally, redox regulated molecular chaperone. Protects both thermally unfolding and oxidatively damaged proteins from irreversible aggregation. Plays an important role in the bacterial defense system toward oxidative stress. This chain is 33 kDa chaperonin, found in Thermodesulfovibrio yellowstonii (strain ATCC 51303 / DSM 11347 / YP87).